The primary structure comprises 226 residues: Probable functional amyloid protease FapD (226 aa).

The first 18 residues, 1–18 (MRRATLCLLLLLAGPSWA), serve as a signal peptide directing secretion. The 131-residue stretch at 50 to 180 (QKTDFSCGAA…AGWNGIVFAV (131 aa)) folds into the Peptidase C39 domain. The active site involves C56.

The protein belongs to the FapD family.

The protein localises to the periplasm. Functionally, probable cysteine protease that is involved in processing fibril precursors. Upon overexpression of the endogenous six-gene locus (fapA-fapF) in situ, cells form large clumps during liquid growth, make large amounts of biofilm and produce amyloid fibrils. Expression of the 6 gene operon in E.coli strain BL21(DE3) induces flocculation and biofilm formation with copious extracellular fibrils. The sequence is that of Probable functional amyloid protease FapD from Pseudomonas fluorescens.